The following is a 210-amino-acid chain: Scoloptoxin SSD976 (210 aa).

Positions 1-23 (MNILLSSTLFVLLMFQIIGSGMG) are cleaved as a signal peptide.

In terms of processing, contains 3 disulfide bonds. Expressed by the venom gland.

It localises to the secreted. Functionally, voltage-gated calcium channel inhibitor. This chain is Scoloptoxin SSD976, found in Scolopendra dehaani (Thai centipede).